The sequence spans 475 residues: Cobyric acid synthase (475 aa).

Positions 244–431 constitute a GATase cobBQ-type domain; the sequence is KLNVVVPVLT…LHGFFDEADV (188 aa). C325 acts as the Nucleophile in catalysis. H423 is a catalytic residue.

It belongs to the CobB/CobQ family. CobQ subfamily.

The protein operates within cofactor biosynthesis; adenosylcobalamin biosynthesis. In terms of biological role, catalyzes amidations at positions B, D, E, and G on adenosylcobyrinic A,C-diamide. NH(2) groups are provided by glutamine, and one molecule of ATP is hydrogenolyzed for each amidation. The protein is Cobyric acid synthase of Vibrio campbellii (strain ATCC BAA-1116).